We begin with the raw amino-acid sequence, 381 residues long: Probable tRNA sulfurtransferase (381 aa).

The region spanning 57-160 is the THUMP domain; the sequence is EKGIEKLKSV…NKAYVYSKKI (104 aa). Residues 177–178, 202–203, Arg-259, Gly-281, and Gln-290 contribute to the ATP site; these read ML and YF.

Belongs to the ThiI family.

It localises to the cytoplasm. The catalysed reaction is [ThiI sulfur-carrier protein]-S-sulfanyl-L-cysteine + a uridine in tRNA + 2 reduced [2Fe-2S]-[ferredoxin] + ATP + H(+) = [ThiI sulfur-carrier protein]-L-cysteine + a 4-thiouridine in tRNA + 2 oxidized [2Fe-2S]-[ferredoxin] + AMP + diphosphate. It carries out the reaction [ThiS sulfur-carrier protein]-C-terminal Gly-Gly-AMP + S-sulfanyl-L-cysteinyl-[cysteine desulfurase] + AH2 = [ThiS sulfur-carrier protein]-C-terminal-Gly-aminoethanethioate + L-cysteinyl-[cysteine desulfurase] + A + AMP + 2 H(+). It functions in the pathway cofactor biosynthesis; thiamine diphosphate biosynthesis. Catalyzes the ATP-dependent transfer of a sulfur to tRNA to produce 4-thiouridine in position 8 of tRNAs, which functions as a near-UV photosensor. Also catalyzes the transfer of sulfur to the sulfur carrier protein ThiS, forming ThiS-thiocarboxylate. This is a step in the synthesis of thiazole, in the thiamine biosynthesis pathway. The sulfur is donated as persulfide by IscS. This is Probable tRNA sulfurtransferase from Clostridium kluyveri (strain NBRC 12016).